The following is a 181-amino-acid chain: Probable toxin TacT (181 aa).

This sequence belongs to the acetyltransferase family. In terms of assembly, forms a complex with cognate antitoxin TacA.

Probable toxin component of a type II toxin-antitoxin (TA) system. Might acetylate tRNA and inhibit translation. Should be neutralized by cognate antitoxin TacA (y4aR). The polypeptide is Probable toxin TacT (Sinorhizobium fredii (strain NBRC 101917 / NGR234)).